Reading from the N-terminus, the 453-residue chain is tRNA modification GTPase MnmE (453 aa).

Residues Arg-28, Glu-86, and Lys-125 each coordinate (6S)-5-formyl-5,6,7,8-tetrahydrofolate. Residues 221-375 (GIKIAIVGEP…LIKYLEETSL (155 aa)) form the TrmE-type G domain. K(+) is bound at residue Asn-231. Residues 231 to 236 (NAGKSS), 250 to 256 (TNIPGTT), and 276 to 279 (DTAG) each bind GTP. Residue Ser-235 participates in Mg(2+) binding. Positions 250, 252, and 255 each coordinate K(+). Residue Thr-256 coordinates Mg(2+). Lys-453 is a binding site for (6S)-5-formyl-5,6,7,8-tetrahydrofolate.

The protein belongs to the TRAFAC class TrmE-Era-EngA-EngB-Septin-like GTPase superfamily. TrmE GTPase family. As to quaternary structure, homodimer. Heterotetramer of two MnmE and two MnmG subunits. It depends on K(+) as a cofactor.

The protein resides in the cytoplasm. In terms of biological role, exhibits a very high intrinsic GTPase hydrolysis rate. Involved in the addition of a carboxymethylaminomethyl (cmnm) group at the wobble position (U34) of certain tRNAs, forming tRNA-cmnm(5)s(2)U34. This chain is tRNA modification GTPase MnmE, found in Mycoplasmoides gallisepticum (strain R(low / passage 15 / clone 2)) (Mycoplasma gallisepticum).